Here is an 833-residue protein sequence, read N- to C-terminus: Leucine--tRNA ligase (833 aa).

Positions 41–52 match the 'HIGH' region motif; the sequence is PYPSGAGLHVGH. The 'KMSKS' region signature appears at 610-614; sequence KMSKS. Lys613 serves as a coordination point for ATP.

Belongs to the class-I aminoacyl-tRNA synthetase family.

The protein localises to the cytoplasm. It catalyses the reaction tRNA(Leu) + L-leucine + ATP = L-leucyl-tRNA(Leu) + AMP + diphosphate. The protein is Leucine--tRNA ligase of Streptococcus pneumoniae (strain Taiwan19F-14).